The chain runs to 226 residues: MSLLQFQQVGYWYKNKSQPLFQDINISFQKGKFYTIVGTSGTGKTTFLSLAGGLDAPKEGNILYDGKAVSKIGLTNFRNQYVSIVFQAYNLLPYMTALQNVTTAMEITGSKEKNKESYALDMLQKVGINEKQARQKVLTLSGGQQQRVSITRAFCCDTDLIVADEPTGNLDEDTSKEIVRLFQDLAHKEDKCVIMVTHDEQIAKVSDINIRLSRGSFTVKENVAVV.

The ABC transporter domain maps to 4–226 (LQFQQVGYWY…FTVKENVAVV (223 aa)). An ATP-binding site is contributed by 38–45 (GTSGTGKT).

The protein belongs to the ABC transporter superfamily.

This is an uncharacterized protein from Bacillus subtilis (strain 168).